The chain runs to 100 residues: Large ribosomal subunit protein uL23 (100 aa).

Belongs to the universal ribosomal protein uL23 family. In terms of assembly, part of the 50S ribosomal subunit. Contacts protein L29, and trigger factor when it is bound to the ribosome.

In terms of biological role, one of the early assembly proteins it binds 23S rRNA. One of the proteins that surrounds the polypeptide exit tunnel on the outside of the ribosome. Forms the main docking site for trigger factor binding to the ribosome. The polypeptide is Large ribosomal subunit protein uL23 (Mycobacteroides abscessus (strain ATCC 19977 / DSM 44196 / CCUG 20993 / CIP 104536 / JCM 13569 / NCTC 13031 / TMC 1543 / L948) (Mycobacterium abscessus)).